Here is a 273-residue protein sequence, read N- to C-terminus: Endoplasmic reticulum resident protein 27 (273 aa).

A signal peptide spans 1–25 (MEAAPSRFMFLLFLLTCELAAEVAA). The region spanning 39 to 152 (EPTWLTDVPA…MVTEYNPVTV (114 aa)) is the Thioredoxin domain. The N-linked (GlcNAc...) asparagine glycan is linked to N100. The segment at 230 to 233 (DEWD) is PDIA3-binding site. The short motif at 270–273 (KVEL) is the Prevents secretion from ER element.

This sequence belongs to the protein disulfide isomerase family. In terms of assembly, interacts with PDIA3.

It localises to the endoplasmic reticulum lumen. Specifically binds unfolded proteins and may recruit protein disulfide isomerase PDIA3 to unfolded substrates. Binds protein substrates via a hydrophobic pocket in the C-terminal domain. May play a role in the unfolded stress response. This Homo sapiens (Human) protein is Endoplasmic reticulum resident protein 27 (ERP27).